A 240-amino-acid polypeptide reads, in one-letter code: Ribonuclease 3 (240 aa).

The 133-residue stretch at 9 to 141 (VEELQKRLGV…LLAALYLDQG (133 aa)) folds into the RNase III domain. Residue Glu54 coordinates Mg(2+). The active site involves Asp58. Asp127 and Glu130 together coordinate Mg(2+). The active site involves Glu130. Residues 168 to 237 (DYKTALQEIV…ARKAYEKLVA (70 aa)) enclose the DRBM domain.

The protein belongs to the ribonuclease III family. Homodimer. The cofactor is Mg(2+).

It localises to the cytoplasm. The catalysed reaction is Endonucleolytic cleavage to 5'-phosphomonoester.. Functionally, digests double-stranded RNA. Involved in the processing of primary rRNA transcript to yield the immediate precursors to the large and small rRNAs (23S and 16S). Processes some mRNAs, and tRNAs when they are encoded in the rRNA operon. Processes pre-crRNA and tracrRNA of type II CRISPR loci if present in the organism. This is Ribonuclease 3 from Thermotoga neapolitana (strain ATCC 49049 / DSM 4359 / NBRC 107923 / NS-E).